We begin with the raw amino-acid sequence, 756 residues long: Ribosomal RNA large subunit methyltransferase K/L (756 aa).

Positions Thr-46 to Leu-157 constitute a THUMP domain. Over residues Glu-395–Ala-409 the composition is skewed to basic and acidic residues. The tract at residues Glu-395–Glu-441 is disordered.

The protein belongs to the methyltransferase superfamily. RlmKL family.

The protein localises to the cytoplasm. The catalysed reaction is guanosine(2445) in 23S rRNA + S-adenosyl-L-methionine = N(2)-methylguanosine(2445) in 23S rRNA + S-adenosyl-L-homocysteine + H(+). The enzyme catalyses guanosine(2069) in 23S rRNA + S-adenosyl-L-methionine = N(2)-methylguanosine(2069) in 23S rRNA + S-adenosyl-L-homocysteine + H(+). Functionally, specifically methylates the guanine in position 2445 (m2G2445) and the guanine in position 2069 (m7G2069) of 23S rRNA. This Pseudomonas fluorescens (strain Pf0-1) protein is Ribosomal RNA large subunit methyltransferase K/L.